The sequence spans 196 residues: uncharacterized protein (196 aa).

This is an uncharacterized protein from Aquifex aeolicus (strain VF5).